The sequence spans 466 residues: Trigger factor (466 aa).

The PPIase FKBP-type domain maps to 162 to 243 (GDVVSIDLSA…VRSVKERELP (82 aa)). A disordered region spans residues 428 to 466 (GNTIDTSEFFGKRVSAGEAEEAEPADEGAARAASDEATT). Low complexity predominate over residues 457 to 466 (ARAASDEATT).

The protein belongs to the FKBP-type PPIase family. Tig subfamily.

It localises to the cytoplasm. The enzyme catalyses [protein]-peptidylproline (omega=180) = [protein]-peptidylproline (omega=0). In terms of biological role, involved in protein export. Acts as a chaperone by maintaining the newly synthesized protein in an open conformation. Functions as a peptidyl-prolyl cis-trans isomerase. The polypeptide is Trigger factor (Mycobacterium bovis (strain BCG / Tokyo 172 / ATCC 35737 / TMC 1019)).